The following is a 473-amino-acid chain: Aspartyl/glutamyl-tRNA(Asn/Gln) amidotransferase subunit B (473 aa).

It belongs to the GatB/GatE family. GatB subfamily. In terms of assembly, heterotrimer of A, B and C subunits.

The catalysed reaction is L-glutamyl-tRNA(Gln) + L-glutamine + ATP + H2O = L-glutaminyl-tRNA(Gln) + L-glutamate + ADP + phosphate + H(+). It carries out the reaction L-aspartyl-tRNA(Asn) + L-glutamine + ATP + H2O = L-asparaginyl-tRNA(Asn) + L-glutamate + ADP + phosphate + 2 H(+). In terms of biological role, allows the formation of correctly charged Asn-tRNA(Asn) or Gln-tRNA(Gln) through the transamidation of misacylated Asp-tRNA(Asn) or Glu-tRNA(Gln) in organisms which lack either or both of asparaginyl-tRNA or glutaminyl-tRNA synthetases. The reaction takes place in the presence of glutamine and ATP through an activated phospho-Asp-tRNA(Asn) or phospho-Glu-tRNA(Gln). This chain is Aspartyl/glutamyl-tRNA(Asn/Gln) amidotransferase subunit B, found in Francisella tularensis subsp. novicida (strain U112).